We begin with the raw amino-acid sequence, 262 residues long: Ribosomal RNA small subunit methyltransferase A (262 aa).

Histidine 16, leucine 18, glycine 43, glutamate 64, aspartate 89, and asparagine 109 together coordinate S-adenosyl-L-methionine.

It belongs to the class I-like SAM-binding methyltransferase superfamily. rRNA adenine N(6)-methyltransferase family. RsmA subfamily.

It localises to the cytoplasm. It catalyses the reaction adenosine(1518)/adenosine(1519) in 16S rRNA + 4 S-adenosyl-L-methionine = N(6)-dimethyladenosine(1518)/N(6)-dimethyladenosine(1519) in 16S rRNA + 4 S-adenosyl-L-homocysteine + 4 H(+). In terms of biological role, specifically dimethylates two adjacent adenosines (A1518 and A1519) in the loop of a conserved hairpin near the 3'-end of 16S rRNA in the 30S particle. May play a critical role in biogenesis of 30S subunits. In Xanthomonas axonopodis pv. citri (strain 306), this protein is Ribosomal RNA small subunit methyltransferase A.